The chain runs to 345 residues: Succinylglutamate desuccinylase (345 aa).

3 residues coordinate Zn(2+): histidine 63, glutamate 66, and histidine 160. Glutamate 224 is a catalytic residue.

The protein belongs to the AspA/AstE family. Succinylglutamate desuccinylase subfamily. It depends on Zn(2+) as a cofactor.

It carries out the reaction N-succinyl-L-glutamate + H2O = L-glutamate + succinate. The protein operates within amino-acid degradation; L-arginine degradation via AST pathway; L-glutamate and succinate from L-arginine: step 5/5. Functionally, transforms N(2)-succinylglutamate into succinate and glutamate. In Shewanella woodyi (strain ATCC 51908 / MS32), this protein is Succinylglutamate desuccinylase.